The primary structure comprises 260 residues: Snake venom serine protease 2 (260 aa).

An N-terminal signal peptide occupies residues 1–18 (MVLIRVLANLLILQLFYA). A propeptide spanning residues 19-24 (QKSSEL) is cleaved from the precursor. In terms of domain architecture, Peptidase S1 spans 25 to 251 (IIGGDECNIN…HLDWIKSIIA (227 aa)). Disulfide bonds link cysteine 31–cysteine 165, cysteine 52–cysteine 68, cysteine 100–cysteine 258, cysteine 144–cysteine 212, cysteine 176–cysteine 191, and cysteine 202–cysteine 227. Asparagine 123 and asparagine 124 each carry an N-linked (GlcNAc...) asparagine glycan.

The protein belongs to the peptidase S1 family. Snake venom subfamily. As to quaternary structure, monomer. As to expression, expressed by the venom gland.

It localises to the secreted. Its function is as follows. Snake venom serine protease that may act in the hemostasis system of the prey. In Protobothrops flavoviridis (Habu), this protein is Snake venom serine protease 2 (TLF2).